The primary structure comprises 100 residues: Large ribosomal subunit protein uL23 (100 aa).

Belongs to the universal ribosomal protein uL23 family. As to quaternary structure, part of the 50S ribosomal subunit. Contacts protein L29, and trigger factor when it is bound to the ribosome.

Its function is as follows. One of the early assembly proteins it binds 23S rRNA. One of the proteins that surrounds the polypeptide exit tunnel on the outside of the ribosome. Forms the main docking site for trigger factor binding to the ribosome. In Thermosynechococcus vestitus (strain NIES-2133 / IAM M-273 / BP-1), this protein is Large ribosomal subunit protein uL23.